The following is a 481-amino-acid chain: Aspartyl/glutamyl-tRNA(Asn/Gln) amidotransferase subunit B (481 aa).

The protein belongs to the GatB/GatE family. GatB subfamily. Heterotrimer of A, B and C subunits.

It carries out the reaction L-glutamyl-tRNA(Gln) + L-glutamine + ATP + H2O = L-glutaminyl-tRNA(Gln) + L-glutamate + ADP + phosphate + H(+). It catalyses the reaction L-aspartyl-tRNA(Asn) + L-glutamine + ATP + H2O = L-asparaginyl-tRNA(Asn) + L-glutamate + ADP + phosphate + 2 H(+). Functionally, allows the formation of correctly charged Asn-tRNA(Asn) or Gln-tRNA(Gln) through the transamidation of misacylated Asp-tRNA(Asn) or Glu-tRNA(Gln) in organisms which lack either or both of asparaginyl-tRNA or glutaminyl-tRNA synthetases. The reaction takes place in the presence of glutamine and ATP through an activated phospho-Asp-tRNA(Asn) or phospho-Glu-tRNA(Gln). The chain is Aspartyl/glutamyl-tRNA(Asn/Gln) amidotransferase subunit B from Pseudomonas putida (strain ATCC 700007 / DSM 6899 / JCM 31910 / BCRC 17059 / LMG 24140 / F1).